Consider the following 219-residue polypeptide: PKHD-type hydroxylase Plav_0037 (219 aa).

The region spanning 78 to 172 is the Fe2OG dioxygenase domain; that stretch reads NFIRILLSRY…RRAAVGWIRS (95 aa). The Fe cation site is built by H96, D98, and H153. R163 is a binding site for 2-oxoglutarate.

Fe(2+) serves as cofactor. The cofactor is L-ascorbate.

This chain is PKHD-type hydroxylase Plav_0037, found in Parvibaculum lavamentivorans (strain DS-1 / DSM 13023 / NCIMB 13966).